Reading from the N-terminus, the 261-residue chain is Cytochrome c oxidase subunit 3 (261 aa).

Topologically, residues 1-15 (MAHQAHAYHMVDPSP) are mitochondrial matrix. Residues 16 to 34 (WPLTGAIAALLLTSGTAVW) traverse the membrane as a helical segment. The Mitochondrial intermembrane portion of the chain corresponds to 35–40 (FHFHSL). A helical transmembrane segment spans residues 41-66 (TLLTLGNILLLLTMYQWWRDIIREGT). The Mitochondrial matrix portion of the chain corresponds to 67–72 (FQGHHT). Residues 73-105 (PPVQKGLRYGMILFITSEVFFFLGFFWAFYHAS) traverse the membrane as a helical segment. Over 106–128 (LAPTPELGGCWPPAGITTLDPFE) the chain is Mitochondrial intermembrane. The chain crosses the membrane as a helical span at residues 129–152 (VPLLNTAVLLASGVTVTWAHHSIM). Residues 153–155 (EGE) are Mitochondrial matrix-facing. The helical transmembrane segment at 156–183 (RKQTIQALTLTILLGFYFTFLQGMEYYE) threads the bilayer. The Mitochondrial intermembrane segment spans residues 184 to 190 (APFTIAD). A helical transmembrane segment spans residues 191–223 (GVYGSTFFVATGFHGLHVIIGSTFLAVCLLRQV). Residues 224 to 232 (QYHFTSEHH) lie on the Mitochondrial matrix side of the membrane. A helical membrane pass occupies residues 233 to 256 (FGFEAAAWYWHFVDVVWLFLYVSI). At 257–261 (YWWGS) the chain is on the mitochondrial intermembrane side.

Belongs to the cytochrome c oxidase subunit 3 family. In terms of assembly, component of the cytochrome c oxidase (complex IV, CIV), a multisubunit enzyme composed of 14 subunits. The complex is composed of a catalytic core of 3 subunits MT-CO1, MT-CO2 and MT-CO3, encoded in the mitochondrial DNA, and 11 supernumerary subunits COX4I, COX5A, COX5B, COX6A, COX6B, COX6C, COX7A, COX7B, COX7C, COX8 and NDUFA4, which are encoded in the nuclear genome. The complex exists as a monomer or a dimer and forms supercomplexes (SCs) in the inner mitochondrial membrane with NADH-ubiquinone oxidoreductase (complex I, CI) and ubiquinol-cytochrome c oxidoreductase (cytochrome b-c1 complex, complex III, CIII), resulting in different assemblies (supercomplex SCI(1)III(2)IV(1) and megacomplex MCI(2)III(2)IV(2)).

The protein resides in the mitochondrion inner membrane. It catalyses the reaction 4 Fe(II)-[cytochrome c] + O2 + 8 H(+)(in) = 4 Fe(III)-[cytochrome c] + 2 H2O + 4 H(+)(out). Its function is as follows. Component of the cytochrome c oxidase, the last enzyme in the mitochondrial electron transport chain which drives oxidative phosphorylation. The respiratory chain contains 3 multisubunit complexes succinate dehydrogenase (complex II, CII), ubiquinol-cytochrome c oxidoreductase (cytochrome b-c1 complex, complex III, CIII) and cytochrome c oxidase (complex IV, CIV), that cooperate to transfer electrons derived from NADH and succinate to molecular oxygen, creating an electrochemical gradient over the inner membrane that drives transmembrane transport and the ATP synthase. Cytochrome c oxidase is the component of the respiratory chain that catalyzes the reduction of oxygen to water. Electrons originating from reduced cytochrome c in the intermembrane space (IMS) are transferred via the dinuclear copper A center (CU(A)) of subunit 2 and heme A of subunit 1 to the active site in subunit 1, a binuclear center (BNC) formed by heme A3 and copper B (CU(B)). The BNC reduces molecular oxygen to 2 water molecules using 4 electrons from cytochrome c in the IMS and 4 protons from the mitochondrial matrix. The protein is Cytochrome c oxidase subunit 3 (mt-co3) of Oncorhynchus mykiss (Rainbow trout).